We begin with the raw amino-acid sequence, 512 residues long: Cytochrome P450 monooxygenase cheE (512 aa).

The helical transmembrane segment at 5-27 (YFAAESSWSPYVILVLALAAMVA) threads the bilayer. N53, N124, and N168 each carry an N-linked (GlcNAc...) asparagine glycan. C455 contacts heme. Residues N499 and N508 are each glycosylated (N-linked (GlcNAc...) asparagine).

Belongs to the cytochrome P450 family. Requires heme as cofactor.

The protein resides in the membrane. The protein operates within secondary metabolite biosynthesis. Its function is as follows. Cytochrome P450 monooxygenase; part of the gene cluster that mediates the biosynthesis of chaetoglobosin A which has a unique inhibitory activity against actin polymerization in mammalian cells. Chaetoglobosin A and its intermediates are involved in the morphological differentiation of C.globosum. The first step of the pathway is the synthesis of prochaetoglobosin I via condensation of one acetyl-CoA, 8 malonyl-CoA, and a L-tryptophan molecule by the PKS-NRPS hybrid synthetase cheA, followed by reduction of backbone double bond to install desired geometry by the enoyl reductase cheB. Further multiple oxidation steps performed by the cytochrome P450 monooxygenases cheE and cheG, as well as by the FAD-linked oxidoreductase cheF, lead to the formation of chaetoglobosin A. Depending on the order of action of these reductases, distinct intermediates can be identified. Within the pathway, the cytochrome P450 monooxygenase cheE catalyzes a stereospecific epoxidation on prochaetoglobosin I, cytoglobosin D, and chaetoglobosin J intermediates. The FAD-linked oxidoreductase cheF performs dehydrogenation of the C-20 hydroxyl groups in the 20-dihyrochaetoglobosin A and cytoglobosin D intermediates. Finally, the cytochrome P450 monooxygenase cheG can catalyze the stereospecific dihydroxylation of prochaetoglobosin I and prochaetoglobosin IV at C-19 and C-20, respectively. The Diels-Alderase cheD may play a role in the post-PKS-NRPS biosynthetic steps catalyzing Diels-Alder cyclization. The polypeptide is Cytochrome P450 monooxygenase cheE (Chaetomium globosum (strain ATCC 6205 / CBS 148.51 / DSM 1962 / NBRC 6347 / NRRL 1970) (Soil fungus)).